A 421-amino-acid chain; its full sequence is Signal recognition particle receptor FtsY (421 aa).

Basic residues predominate over residues 1-10; the sequence is MFSFFRRKKK. The disordered stretch occupies residues 1–31; that stretch reads MFSFFRRKKKQETPALEEAQIQETAAKAESE. Residues 228-235, 309-313, and 373-376 each bind GTP; these read GINGAGKT, DTAGR, and TKLD.

Belongs to the GTP-binding SRP family. FtsY subfamily. Part of the signal recognition particle protein translocation system, which is composed of SRP and FtsY. SRP is a ribonucleoprotein composed of Ffh and a 4.5S RNA molecule.

It localises to the cell inner membrane. The protein resides in the cytoplasm. The enzyme catalyses GTP + H2O = GDP + phosphate + H(+). Involved in targeting and insertion of nascent membrane proteins into the cytoplasmic membrane. Acts as a receptor for the complex formed by the signal recognition particle (SRP) and the ribosome-nascent chain (RNC). Interaction with SRP-RNC leads to the transfer of the RNC complex to the Sec translocase for insertion into the membrane, the hydrolysis of GTP by both Ffh and FtsY, and the dissociation of the SRP-FtsY complex into the individual components. This is Signal recognition particle receptor FtsY from Neisseria meningitidis serogroup A / serotype 4A (strain DSM 15465 / Z2491).